Reading from the N-terminus, the 403-residue chain is Sulfate adenylyltransferase (403 aa).

It belongs to the sulfate adenylyltransferase family.

The enzyme catalyses sulfate + ATP + H(+) = adenosine 5'-phosphosulfate + diphosphate. It functions in the pathway sulfur metabolism; hydrogen sulfide biosynthesis; sulfite from sulfate: step 1/3. The chain is Sulfate adenylyltransferase from Pelodictyon phaeoclathratiforme (strain DSM 5477 / BU-1).